Reading from the N-terminus, the 287-residue chain is MLLFINRFAKTIILLFGMLVFLVLLGLGGAALYFKDNAAKLYIDTRKSIDSSFDSSQAFIDTYNGSSSKFSVESINKQIEEVKKKVEESTKKLEEYEKQINQAKGLNGYLVSPEKLKELQEAKKSLQATKSQIEKYANTLKTANNGKTGQNGTSSSTIPITKISGSTISVSTRDTNGKTNSALKDIQEFSTQANDIIKQYKEIKNKIPTEKQFNEYYTIGAITLVSVSGGVLAVLIVSTVMTFLGSKKLGLRTFSRLTSTDQIADHVNDILDRYPELEDAVLEELDQ.

2 helical membrane passes run Ile-12–Leu-32 and Tyr-217–Val-237.

It localises to the cell membrane. This is an uncharacterized protein from Mycoplasma pneumoniae (strain ATCC 29342 / M129 / Subtype 1) (Mycoplasmoides pneumoniae).